The chain runs to 70 residues: Large ribosomal subunit protein eL38 (70 aa).

The protein belongs to the eukaryotic ribosomal protein eL38 family.

This is Large ribosomal subunit protein eL38 (RpL38) from Plutella xylostella (Diamondback moth).